The following is a 955-amino-acid chain: Vacuolar membrane protease (955 aa).

Topologically, residues 1–16 (MASLRLPRANPLAFTR) are cytoplasmic. The chain crosses the membrane as a helical span at residues 17-37 (WPVTVITAIVYLALLIPLLVV). Topologically, residues 38 to 390 (HHVVPSAPSS…STFVLFQLHT (353 aa)) are vacuolar. N-linked (GlcNAc...) asparagine glycans are attached at residues Asn-53 and Asn-119. Positions 174 and 186 each coordinate Zn(2+). Glu-220 serves as the catalytic Proton acceptor. Zn(2+) contacts are provided by Glu-221, Glu-246, and His-319. A helical transmembrane segment spans residues 391 to 411 (LFALLVTLLIVGPLTLLFTSI). Topologically, residues 412-442 (ALTKADKMYLFRSSAKSEDRLDVVPLQGLRG) are cytoplasmic. Residues 443 to 463 (FFRFPFLFGIPTVVTVGLAYL) form a helical membrane-spanning segment. The Vacuolar portion of the chain corresponds to 464-473 (VTKVNPYIIH). The helical transmembrane segment at 474–494 (SSAYAVWSMMVAAWVFLAWFV) threads the bilayer. Over 495–508 (SRVADFARPSAFHR) the chain is Cytoplasmic. Residues 509-529 (IYTLTWMYVLSWVSAVIATVY) form a helical membrane-spanning segment. Over 530–533 (ANQR) the chain is Vacuolar. The chain crosses the membrane as a helical span at residues 534–554 (GLAGGYFIFFFHAGIFLAKWI). Topologically, residues 555–656 (SYLELFALPS…WSYALPKWTW (102 aa)) are cytoplasmic. The segment covering 574-590 (SASGRASGHGSRRGTTS) has biased composition (low complexity). Residues 574–611 (SASGRASGHGSRRGTTSGEDDGEEAEEEPTESTSLLGS) are disordered. Residues 591-603 (GEDDGEEAEEEPT) are compositionally biased toward acidic residues. The helical transmembrane segment at 657–677 (VLQLLLTAPITLIMVGPLALL) threads the bilayer. The Vacuolar segment spans residues 678–693 (TISAISQTGQDGGHPL). Residues 694 to 714 (FAYVAIAIFTTIMLTPLLPFI) form a helical membrane-spanning segment. Residues 715–721 (HRYTYHV) lie on the Cytoplasmic side of the membrane. A helical membrane pass occupies residues 722–742 (PLFLLAVFLGTLIYNLVAFPF). The Vacuolar portion of the chain corresponds to 743–955 (SDSNRLKLYY…RRAFEIGNDD (213 aa)). Asn-826 is a glycosylation site (N-linked (GlcNAc...) asparagine).

It belongs to the peptidase M28 family. It depends on Zn(2+) as a cofactor.

The protein resides in the vacuole membrane. In terms of biological role, may be involved in vacuolar sorting and osmoregulation. The protein is Vacuolar membrane protease of Aspergillus oryzae (strain ATCC 42149 / RIB 40) (Yellow koji mold).